The sequence spans 103 residues: Co-chaperonin GroES (103 aa).

The protein belongs to the GroES chaperonin family. Heptamer of 7 subunits arranged in a ring. Interacts with the chaperonin GroEL.

It is found in the cytoplasm. In terms of biological role, together with the chaperonin GroEL, plays an essential role in assisting protein folding. The GroEL-GroES system forms a nano-cage that allows encapsulation of the non-native substrate proteins and provides a physical environment optimized to promote and accelerate protein folding. GroES binds to the apical surface of the GroEL ring, thereby capping the opening of the GroEL channel. The chain is Co-chaperonin GroES from Prochlorococcus marinus (strain MIT 9515).